The chain runs to 138 residues: ATP synthase epsilon chain (138 aa).

It belongs to the ATPase epsilon chain family. As to quaternary structure, F-type ATPases have 2 components, CF(1) - the catalytic core - and CF(0) - the membrane proton channel. CF(1) has five subunits: alpha(3), beta(3), gamma(1), delta(1), epsilon(1). CF(0) has three main subunits: a, b and c.

The protein localises to the cell membrane. Its function is as follows. Produces ATP from ADP in the presence of a proton gradient across the membrane. The protein is ATP synthase epsilon chain of Streptococcus equinus (Streptococcus bovis).